A 233-amino-acid chain; its full sequence is C-type lectin domain family 2 member D5 (233 aa).

Residues 1-52 are disordered; it reads MPSSAHLQDPPPLLSRTLTQNEGQTSLRQSSSCGPSAASASESLSGSTESRI. Over 1-76 the chain is Cytoplasmic; sequence MPSSAHLQDP…PLEYPAGLYC (76 aa). The segment covering 16 to 29 has biased composition (polar residues); it reads RTLTQNEGQTSLRQ. Residues 30–50 are compositionally biased toward low complexity; it reads SSSCGPSAASASESLSGSTES. The helical; Signal-anchor for type II membrane protein transmembrane segment at 77 to 97 threads the bilayer; it reads CYVVIIVLSVAVVALSVALSV. Residues 98–233 are Extracellular-facing; the sequence is KKTAQISTIN…KPNSYTSQCL (136 aa). Positions 119-228 constitute a C-type lectin domain; the sequence is VGNKCFYFNE…KSICRKPNSY (110 aa). A glycan (N-linked (GlcNAc...) asparagine) is linked at asparagine 132.

Its subcellular location is the cell membrane. Its function is as follows. Lectin-type cell surface receptor. This chain is C-type lectin domain family 2 member D5 (Ocil), found in Rattus norvegicus (Rat).